The primary structure comprises 62 residues: Large ribosomal subunit protein bL28 (62 aa).

It belongs to the bacterial ribosomal protein bL28 family.

This Staphylococcus haemolyticus (strain JCSC1435) protein is Large ribosomal subunit protein bL28.